The sequence spans 471 residues: Probable ribonuclease FAU-1 (471 aa).

Positions 93–139 (GAVFDAAVDHTVGGGAILDLGDDREAYLPFGAVDDHVTDGDTLRVAI) constitute an S1 motif domain.

Belongs to the FAU-1 family.

Its function is as follows. Probable RNase involved in rRNA stability through maturation and/or degradation of precursor rRNAs. Binds to RNA in loop regions with AU-rich sequences. This is Probable ribonuclease FAU-1 from Halobacterium salinarum (strain ATCC 29341 / DSM 671 / R1).